Reading from the N-terminus, the 341-residue chain is S-adenosylmethionine:tRNA ribosyltransferase-isomerase (341 aa).

This sequence belongs to the QueA family. As to quaternary structure, monomer.

The protein resides in the cytoplasm. It carries out the reaction 7-aminomethyl-7-carbaguanosine(34) in tRNA + S-adenosyl-L-methionine = epoxyqueuosine(34) in tRNA + adenine + L-methionine + 2 H(+). It participates in tRNA modification; tRNA-queuosine biosynthesis. Its function is as follows. Transfers and isomerizes the ribose moiety from AdoMet to the 7-aminomethyl group of 7-deazaguanine (preQ1-tRNA) to give epoxyqueuosine (oQ-tRNA). The polypeptide is S-adenosylmethionine:tRNA ribosyltransferase-isomerase (Chlorobium chlorochromatii (strain CaD3)).